Reading from the N-terminus, the 378-residue chain is MTENKSFKESHPLDDFISDKELSNTTIQKEKLTIEQQKQVDTISKQINPLDNEGLLAFGSDLQKQMSQFSHQMLDEVQSKDVGPIGDTLSDLISKLKSVNPNELNTDKPSMLKRIFSRAKSSINEIFSRMQSVSAQVDRITIQLQKHQTHLTRDIELLDTLYDKNKQYFDDLSLHIIAAQQKKLQLENEKLPQLQQQAQQSTNQMDIQHVADMQQFIDRLDKRIYDLQLSRQIALQTAPQIRMIQNVNQALAEKIQSSILTSIPLWKNQMAIALTLMRQRNAVAAQRAVTDTTNDLLTANAEMLKQNAIETATENERGIVDLDTLKRTQRNIIETIEETLIIQQHGREERQLAEKELQQLEQDLKSHLVNIKGTNKQS.

This sequence belongs to the TelA family.

The sequence is that of TelA-like protein SAS1347 from Staphylococcus aureus (strain MSSA476).